The primary structure comprises 311 residues: MQAPPPEHCPGLESEQAGKASACAGCPNQGVCSDPNKKLEDPGKALVVESMKDVKHKLLILSGKGGVGKSTVTSLLTRYLARSNPDSNFGVLDIDICGPSQPRLMGALGESVHQSGYGWSPVGIEDNVCLMSIGFLLGSVDDAIIWRGPKKNGMIRQFLSEVDWGNLDLLLLDTPPGTSDEHLSVVSYLKDDTNPESLCAVMVTTPQEVSLLDVRKEINFCKKQNIPIVGVIENMSSFRCGNCGNSSEIFPAKTGGAAAMCAEMGIPLLGSLPLDQQIAKACDSGEDITEFKNVTTEALDGICSKIIASFS.

The [4Fe-4S] cluster site is built by C9, C23, C26, and C32. Position 63–70 (63–70 (GKGGVGKS)) interacts with ATP. Residues C240 and C243 each contribute to the [4Fe-4S] cluster site.

The protein belongs to the Mrp/NBP35 ATP-binding proteins family. NUBP1/NBP35 subfamily. Heterotetramer of 2 Nubp1 and 2 Nubp2 chains. [4Fe-4S] cluster is required as a cofactor.

The protein resides in the cytoplasm. Its function is as follows. Component of the cytosolic iron-sulfur (Fe/S) protein assembly (CIA) machinery. Required for maturation of extramitochondrial Fe-S proteins. The Nubp1-Nubp2 heterotetramer forms a Fe-S scaffold complex, mediating the de novo assembly of an Fe-S cluster and its transfer to target apoproteins. This chain is Cytosolic Fe-S cluster assembly factor Nubp1 homolog, found in Drosophila erecta (Fruit fly).